Reading from the N-terminus, the 268-residue chain is Homeobox protein CDX-1 (268 aa).

The segment at Met1 to Arg152 is disordered. Pro residues-rich tracts occupy residues Thr29–Tyr42 and Ala54–Ala67. The span at Ala73–Ala91 shows a compositional bias: low complexity. Positions Phe92 to Gly108 are enriched in pro residues. A compositionally biased stretch (low complexity) spans Ser115–Pro128. A DNA-binding region (homeobox) is located at residues Lys154 to Asn213. Residues Tyr157–Tyr178 are interaction with DNA. Positions Arg196–Ala207 are interaction with 5-mCpG DNA. The disordered stretch occupies residues Glu209–Pro268. Over residues Pro229–Leu246 the composition is skewed to low complexity.

The protein belongs to the Caudal homeobox family. Intestinal epithelium.

Its subcellular location is the nucleus. Its function is as follows. Plays a role in transcriptional regulation. Involved in activated KRAS-mediated transcriptional activation of PRKD1 in colorectal cancer (CRC) cells. Binds to the PRKD1 promoter in colorectal cancer (CRC) cells. Could play a role in the terminal differentiation of the intestine. Binds preferentially to methylated DNA. In Mus musculus (Mouse), this protein is Homeobox protein CDX-1 (Cdx1).